We begin with the raw amino-acid sequence, 189 residues long: Small ribosomal subunit protein uS5 (189 aa).

In terms of domain architecture, S5 DRBM spans 22–85; it reads LIDKLVTINR…ERAKRGMIRV (64 aa). The segment at 164-189 is disordered; the sequence is SVASRRGKKVADLFGPKREKEAPADV. The segment covering 172–189 has biased composition (basic and acidic residues); sequence KVADLFGPKREKEAPADV.

The protein belongs to the universal ribosomal protein uS5 family. As to quaternary structure, part of the 30S ribosomal subunit. Contacts proteins S4 and S8.

Functionally, with S4 and S12 plays an important role in translational accuracy. Located at the back of the 30S subunit body where it stabilizes the conformation of the head with respect to the body. The sequence is that of Small ribosomal subunit protein uS5 from Acidiphilium cryptum (strain JF-5).